The sequence spans 110 residues: PHD finger-like domain-containing protein 5A (110 aa).

Alanine 2 bears the N-acetylalanine mark. Position 3 is an N6-acetyllysine (lysine 3). 11 residues coordinate Zn(2+): cysteine 11, cysteine 23, cysteine 26, cysteine 30, cysteine 33, cysteine 46, cysteine 49, cysteine 58, cysteine 61, cysteine 72, and cysteine 75. An interaction with SF3B1 and SF3B3 region spans residues 35-51 (SYVRPCTLVRICDECNY). The interval 79–82 (EKDR) is interaction with SF3B3. Cysteine 85 contacts Zn(2+). Serine 94 carries the post-translational modification Phosphoserine.

The protein belongs to the PHF5 family. Component of the 17S U2 SnRNP complex, a ribonucleoprotein complex that contains small nuclear RNA (snRNA) U2 and a number of specific proteins. Part of the SF3B subcomplex of the 17S U2 SnRNP complex. SF3B associates with the splicing subcomplex SF3A and a 12S RNA unit to form the U2 small nuclear ribonucleoproteins complex (U2 snRNP). Within the SF3B complex interacts directly with SF3B1 and SF3B3. Component of the minor spliceosome, which splices U12-type introns. Within this complex, interacts with CRIPT. Interacts (via N-terminus) with U2AF1 and SRSF5; acts to bridge the two. Interacts (via C-terminus) with EP400 and DDX1; acts to bridge the two. Interacts with the PAF1 complex (PAF1C) composed of CDC73, PAF1, LEO1, CTR9, RTF1 and SKIC8. Within the PAF1C interacts directly with CDC73 and SKIC8. Interacts with RNA polymerase II. As to expression, expressed in primary spermatocytes (at protein level). Ubiquitously expressed in pre- and postnatal tissues. Highly expressed in pluripotent embryonic stem cells (ESCs) (at protein level) and induced pluripotent stem cells (iPSCs).

The protein localises to the nucleus. Its subcellular location is the nucleus speckle. Functionally, component of the 17S U2 SnRNP complex of the spliceosome, a large ribonucleoprotein complex that removes introns from transcribed pre-mRNAs. The 17S U2 SnRNP complex (1) directly participates in early spliceosome assembly and (2) mediates recognition of the intron branch site during pre-mRNA splicing by promoting the selection of the pre-mRNA branch-site adenosine, the nucleophile for the first step of splicing. Within the 17S U2 SnRNP complex, PHF5A is part of the SF3B subcomplex, which is required for 'A' complex assembly formed by the stable binding of U2 snRNP to the branchpoint sequence in pre-mRNA. Sequence independent binding of SF3A and SF3B subcomplexes upstream of the branch site is essential, it may anchor U2 snRNP to the pre-mRNA. Also acts as a component of the minor spliceosome, which is involved in the splicing of U12-type introns in pre-mRNAs. Also involved in elongation by RNA polymerase II as part of the PAF1 complex (PAF1C). PAF1C is required for maintenance of embryonic stem cell (ESC) self-renewal and cellular reprogramming of stem cells. Maintains pluripotency by recruiting and stabilizing PAF1C on pluripotency genes loci, and by regulating the expression of the pluripotency genes. Regulates the deposition of elongation-associated histone modifications, including dimethylated histone H3 'Lys-79' (H3K79me2) and trimethylated histone H3 'Lys-36' (H3K36me3), on PAF1C targets, self-renewal and pluripotency genes. Regulates RNA polymerase II promoter-proximal pause release of the PAF1C targets and self-renewal genes, and the levels of elongating ('Ser-2' phosphorylated) RNA polymerase II in their gene bodies. Regulates muscle specification in adult stem cells by stabilizing PAF1C in chromatin to promote myogenic differentiation. Acts as a transcriptional regulator by binding to the GJA1/Cx43 promoter and enhancing its up-regulation by ESR1/ER-alpha. The chain is PHD finger-like domain-containing protein 5A (Phf5a) from Mus musculus (Mouse).